Reading from the N-terminus, the 672-residue chain is Glycine--tRNA ligase beta subunit (672 aa).

The protein belongs to the class-II aminoacyl-tRNA synthetase family. As to quaternary structure, tetramer of two alpha and two beta subunits.

The protein localises to the cytoplasm. It catalyses the reaction tRNA(Gly) + glycine + ATP = glycyl-tRNA(Gly) + AMP + diphosphate. This Thermotoga petrophila (strain ATCC BAA-488 / DSM 13995 / JCM 10881 / RKU-1) protein is Glycine--tRNA ligase beta subunit.